Reading from the N-terminus, the 389-residue chain is Alanine racemase (389 aa).

Catalysis depends on lysine 48, which acts as the Proton acceptor; specific for D-alanine. Lysine 48 is subject to N6-(pyridoxal phosphate)lysine. Arginine 144 provides a ligand contact to substrate. Tyrosine 281 (proton acceptor; specific for L-alanine) is an active-site residue. Methionine 329 contributes to the substrate binding site.

The protein belongs to the alanine racemase family. Requires pyridoxal 5'-phosphate as cofactor.

The enzyme catalyses L-alanine = D-alanine. The protein operates within amino-acid biosynthesis; D-alanine biosynthesis; D-alanine from L-alanine: step 1/1. Catalyzes the interconversion of L-alanine and D-alanine. May also act on other amino acids. This Leptospira interrogans serogroup Icterohaemorrhagiae serovar copenhageni (strain Fiocruz L1-130) protein is Alanine racemase (alr).